Reading from the N-terminus, the 365-residue chain is MTQQPTLFIDRDGTLIDEPKTDFQIDSLEKLKFERNVIPALLKLKNRYRFVMVSNQDGLGTDSFPQEDFDKPHNAMLAVFRSQGIEFDDILICPHKPEDNCDCRKPKIKLLKKYIDKKLFDPADSFVIGDRPTDVQLAENLGIRALQYHPENLDWDMIAEKLLREPVADPKGLGQPRHAVVARKTKETDIKVEVWLDEAGVNQINTGIGFFDHMLDQIATHGGFRMNVSCKGDLHIDDHHTIEDVALALGAALKEAIGNKRGIQRFGFVLPMDECKAECALDLSGRPYFKFKAKFNRDKVGDFSTEMTEHFFQSIAYTLLATLHLSVKGDNAHHQIEALFKAFGRTLRQAIKIEGNEMPSSKGVL.

Positions 1 to 176 (MTQQPTLFID…VADPKGLGQP (176 aa)) are histidinol-phosphatase. Aspartate 10 (nucleophile) is an active-site residue. Residues aspartate 10 and aspartate 12 each coordinate Mg(2+). Aspartate 12 functions as the Proton donor in the catalytic mechanism. The Zn(2+) site is built by cysteine 93, histidine 95, cysteine 101, and cysteine 103. Mg(2+) is bound at residue aspartate 130. The tract at residues 177–365 (RHAVVARKTK…NEMPSSKGVL (189 aa)) is imidazoleglycerol-phosphate dehydratase.

The protein in the N-terminal section; belongs to the histidinol-phosphatase family. In the C-terminal section; belongs to the imidazoleglycerol-phosphate dehydratase family. Requires Mg(2+) as cofactor. Zn(2+) serves as cofactor.

Its subcellular location is the cytoplasm. The catalysed reaction is D-erythro-1-(imidazol-4-yl)glycerol 3-phosphate = 3-(imidazol-4-yl)-2-oxopropyl phosphate + H2O. The enzyme catalyses L-histidinol phosphate + H2O = L-histidinol + phosphate. The protein operates within amino-acid biosynthesis; L-histidine biosynthesis; L-histidine from 5-phospho-alpha-D-ribose 1-diphosphate: step 6/9. It participates in amino-acid biosynthesis; L-histidine biosynthesis; L-histidine from 5-phospho-alpha-D-ribose 1-diphosphate: step 8/9. The chain is Histidine biosynthesis bifunctional protein HisB from Mannheimia succiniciproducens (strain KCTC 0769BP / MBEL55E).